The sequence spans 543 residues: Serendipity locus protein alpha (543 aa).

Its subcellular location is the cytoplasm. It localises to the cell membrane. In terms of biological role, required for the cellularization of the syncytial blastoderm embryo. Involved in the localization of the actin filaments just prior to and during plasma membrane invagination. Sry-alpha together with nullo and bnk may provide auxiliary functions, by acting both to stabilize a large and dynamic microfilament structure and regulate its functions. The sequence is that of Serendipity locus protein alpha (Sry-alpha) from Drosophila subobscura (Fruit fly).